We begin with the raw amino-acid sequence, 150 residues long: Large ribosomal subunit protein bL9 (150 aa).

This sequence belongs to the bacterial ribosomal protein bL9 family.

Binds to the 23S rRNA. This chain is Large ribosomal subunit protein bL9, found in Neisseria gonorrhoeae (strain ATCC 700825 / FA 1090).